A 366-amino-acid chain; its full sequence is Flagellar P-ring protein (366 aa).

A signal peptide spans 1 to 24 (MWPLLLAVALSTLLPLAMPGSAGA).

The protein belongs to the FlgI family. As to quaternary structure, the basal body constitutes a major portion of the flagellar organelle and consists of four rings (L,P,S, and M) mounted on a central rod.

The protein localises to the periplasm. The protein resides in the bacterial flagellum basal body. Functionally, assembles around the rod to form the L-ring and probably protects the motor/basal body from shearing forces during rotation. This is Flagellar P-ring protein from Nitratidesulfovibrio vulgaris (strain ATCC 29579 / DSM 644 / CCUG 34227 / NCIMB 8303 / VKM B-1760 / Hildenborough) (Desulfovibrio vulgaris).